The chain runs to 438 residues: 3-phosphoshikimate 1-carboxyvinyltransferase (438 aa).

Residues K25, S26, and R30 each coordinate 3-phosphoshikimate. K25 contributes to the phosphoenolpyruvate binding site. Phosphoenolpyruvate contacts are provided by G99 and R128. 3-phosphoshikimate contacts are provided by S173, Q175, D325, and K352. Q175 is a phosphoenolpyruvate binding site. D325 serves as the catalytic Proton acceptor. Residues R356 and R398 each coordinate phosphoenolpyruvate.

It belongs to the EPSP synthase family. As to quaternary structure, monomer.

It is found in the cytoplasm. The enzyme catalyses 3-phosphoshikimate + phosphoenolpyruvate = 5-O-(1-carboxyvinyl)-3-phosphoshikimate + phosphate. The protein operates within metabolic intermediate biosynthesis; chorismate biosynthesis; chorismate from D-erythrose 4-phosphate and phosphoenolpyruvate: step 6/7. Catalyzes the transfer of the enolpyruvyl moiety of phosphoenolpyruvate (PEP) to the 5-hydroxyl of shikimate-3-phosphate (S3P) to produce enolpyruvyl shikimate-3-phosphate and inorganic phosphate. This is 3-phosphoshikimate 1-carboxyvinyltransferase from Prochlorococcus marinus subsp. pastoris (strain CCMP1986 / NIES-2087 / MED4).